Reading from the N-terminus, the 667-residue chain is WD40 repeat-containing protein DDB_G0271002 (667 aa).

WD repeat units follow at residues 165-204 (NHGVSTWGIAICPSKPLIAVSSNSHKITIWNLDDENPQET) and 210-249 (KHKHNIPSIDFSPCGNYLVSVSIDKNIRIWDVNKRQLLRI). Over residues 278–293 (SSNSRDNNNNNSNSNN) the composition is skewed to low complexity. Disordered regions lie at residues 278-301 (SSNSRDNNNNNSNSNNNGGGGIII), 316-345 (LVENNQEVEPMPEEEEEEEEEEVNQVDNDD), and 389-440 (DIIF…ATTT). Acidic residues predominate over residues 325 to 345 (PMPEEEEEEEEEEVNQVDNDD). The span at 400–410 (NQHQQQQQQNQ) shows a compositional bias: low complexity. Over residues 411–428 (EIEEEGQEGQEEQEDGTE) the composition is skewed to acidic residues. The segment covering 429–440 (NENNQGTIATTT) has biased composition (low complexity).

This Dictyostelium discoideum (Social amoeba) protein is WD40 repeat-containing protein DDB_G0271002.